The chain runs to 192 residues: MTEKEKMLAHQWYDANFDKDLETERVRAKDLCFDFNQTRPSDDSRRQAILTELFGYTLENVAINSPFDTDYGWNVKLGKNVFVNSNCYFMDGGGITIGNDVFIGPSCGFYTAHHPLTPKERNAGLELAQPITIGNNIWFGGNVVVTPGVTIGDGSVIAAGSVVTKDVPPNSLVAGVPAKVIREINENDAPKN.

This sequence belongs to the transferase hexapeptide repeat family.

The sequence is that of Putative acetyltransferase SH0499 from Staphylococcus haemolyticus (strain JCSC1435).